Reading from the N-terminus, the 395-residue chain is Nucleoside diphosphate kinase homolog 7 (395 aa).

Residues 22–110 (QSERFAFIAE…YTARQLGSRK (89 aa)) form the DM10 domain.

This sequence belongs to the NDK family. Component of sperm flagellar doublet microtubules. Component of the gamma-tubulin ring complex.

The protein resides in the cytoplasm. It is found in the cytoskeleton. It localises to the microtubule organizing center. The protein localises to the centrosome. Its subcellular location is the nucleus. The protein resides in the spindle. It is found in the cilium axoneme. It localises to the flagellum axoneme. The protein localises to the cell projection. Its subcellular location is the cilium. Possesses an intrinsic kinase activity. Displays 3'-5' exonuclease activity with a preference for single-stranded DNA. Does not seem to have nucleoside diphosphate kinase activity. Functional component of the gamma-tubulin ring complex, implicated in the regulation of the microtubule-nucleating activity of the gamma-tubulin ring complex in centrosomes, in a kinase activity-dependent manner. Part of the dynein-decorated doublet microtubules (DMTs) in cilia axoneme, which is required for motile cilia beating. This chain is Nucleoside diphosphate kinase homolog 7, found in Mus musculus (Mouse).